We begin with the raw amino-acid sequence, 293 residues long: MKASSKAIKLVLDHLKSTGRVLGSVESGNSATISEKTASVNKQQQLQEKKPSVLQYRSYNPYLVKEDFLSILPENLYKKRGQFTNELDFQLMKVRDPKYFQFKDQYYLFFNDYNSLTEYIKLTKHSRINKIRVKMTPLAQPLPTLLTKLQRYSKNLYNAFRSSEQYFEGLNEKVDVSGEFTTNQLRSILDSVEEIENKSVLVWNIPTKLRSHDILNYFWFYNIRSSFKIYWDDEMKRNLRFISFENSHDAYRFKRNYHGLLAKELLTLSEKGDAADYSLEMDDSKILIEHLSE.

The protein resides in the mitochondrion inner membrane. In terms of biological role, activator of specific mitochondrial mRNAs. PET54 is involved in the excision of intron aI5-beta from pre-mRNA for cytochrome c oxidase I (COX1) and plays a role in promoting the translation of COX3. The polypeptide is Protein PET54 (PET54) (Saccharomyces cerevisiae (strain ATCC 204508 / S288c) (Baker's yeast)).